Consider the following 185-residue polypeptide: Ribosome-recycling factor (185 aa).

It belongs to the RRF family.

Its subcellular location is the cytoplasm. Functionally, responsible for the release of ribosomes from messenger RNA at the termination of protein biosynthesis. May increase the efficiency of translation by recycling ribosomes from one round of translation to another. In Nocardioides sp. (strain ATCC BAA-499 / JS614), this protein is Ribosome-recycling factor.